The following is a 662-amino-acid chain: UvrABC system protein B (662 aa).

A Helicase ATP-binding domain is found at 25–182 (KGIEKGEKFQ…KKLVEIQYER (158 aa)). An ATP-binding site is contributed by 38 to 45 (GVTGSGKT). A Beta-hairpin motif is present at residues 91–114 (YYDYYQPEAYVAQSDTYIEKDASI). The Helicase C-terminal domain occupies 429 to 595 (QIDDLYTSIQ…TIIKDIREVI (167 aa)). Residues 622-657 (DKLIEKYEEEMKEAAQNLQFEKAAHLRDVIYKLKRD) form the UVR domain.

Belongs to the UvrB family. As to quaternary structure, forms a heterotetramer with UvrA during the search for lesions. Interacts with UvrC in an incision complex.

The protein localises to the cytoplasm. In terms of biological role, the UvrABC repair system catalyzes the recognition and processing of DNA lesions. A damage recognition complex composed of 2 UvrA and 2 UvrB subunits scans DNA for abnormalities. Upon binding of the UvrA(2)B(2) complex to a putative damaged site, the DNA wraps around one UvrB monomer. DNA wrap is dependent on ATP binding by UvrB and probably causes local melting of the DNA helix, facilitating insertion of UvrB beta-hairpin between the DNA strands. Then UvrB probes one DNA strand for the presence of a lesion. If a lesion is found the UvrA subunits dissociate and the UvrB-DNA preincision complex is formed. This complex is subsequently bound by UvrC and the second UvrB is released. If no lesion is found, the DNA wraps around the other UvrB subunit that will check the other stand for damage. The chain is UvrABC system protein B from Clostridium botulinum (strain Loch Maree / Type A3).